Reading from the N-terminus, the 143-residue chain is Nucleoside diphosphate kinase (143 aa).

Lysine 11, phenylalanine 59, arginine 87, threonine 93, arginine 104, and asparagine 114 together coordinate ATP. Histidine 117 (pros-phosphohistidine intermediate) is an active-site residue.

The protein belongs to the NDK family. As to quaternary structure, homotetramer. Requires Mg(2+) as cofactor.

The protein resides in the cytoplasm. It carries out the reaction a 2'-deoxyribonucleoside 5'-diphosphate + ATP = a 2'-deoxyribonucleoside 5'-triphosphate + ADP. The enzyme catalyses a ribonucleoside 5'-diphosphate + ATP = a ribonucleoside 5'-triphosphate + ADP. Functionally, major role in the synthesis of nucleoside triphosphates other than ATP. The ATP gamma phosphate is transferred to the NDP beta phosphate via a ping-pong mechanism, using a phosphorylated active-site intermediate. This chain is Nucleoside diphosphate kinase, found in Cronobacter sakazakii (strain ATCC BAA-894) (Enterobacter sakazakii).